We begin with the raw amino-acid sequence, 83 residues long: Alpha-elapitoxin-Ppr1 (83 aa).

An N-terminal signal peptide occupies residues M1–T21. 4 disulfide bridges follow: C24-C45, C38-C62, C64-C75, and C76-C81.

It belongs to the three-finger toxin family. Short-chain subfamily. Type I alpha-neurotoxin sub-subfamily. In terms of tissue distribution, expressed by the venom gland.

Its subcellular location is the secreted. In terms of biological role, bird-specific neurotoxin (tested on chicken) that acts as a pseudo-irreversible antagonist at the nicotinic acetylcholine receptor (nAChR) of the skeletal neuromuscular junction. Has no significant effect on the electrically-induced twitches of the rat isolated phrenic nerve-diaphragm preparation. This Pseudechis porphyriacus (Red-bellied black snake) protein is Alpha-elapitoxin-Ppr1.